The following is a 257-amino-acid chain: Imidazole glycerol phosphate synthase subunit HisF (257 aa).

Active-site residues include D11 and D130.

It belongs to the HisA/HisF family. As to quaternary structure, heterodimer of HisH and HisF.

Its subcellular location is the cytoplasm. The enzyme catalyses 5-[(5-phospho-1-deoxy-D-ribulos-1-ylimino)methylamino]-1-(5-phospho-beta-D-ribosyl)imidazole-4-carboxamide + L-glutamine = D-erythro-1-(imidazol-4-yl)glycerol 3-phosphate + 5-amino-1-(5-phospho-beta-D-ribosyl)imidazole-4-carboxamide + L-glutamate + H(+). It participates in amino-acid biosynthesis; L-histidine biosynthesis; L-histidine from 5-phospho-alpha-D-ribose 1-diphosphate: step 5/9. Functionally, IGPS catalyzes the conversion of PRFAR and glutamine to IGP, AICAR and glutamate. The HisF subunit catalyzes the cyclization activity that produces IGP and AICAR from PRFAR using the ammonia provided by the HisH subunit. This chain is Imidazole glycerol phosphate synthase subunit HisF, found in Shewanella putrefaciens (strain CN-32 / ATCC BAA-453).